We begin with the raw amino-acid sequence, 534 residues long: MAIKLIALVITICVASWDSAQGRSLRFSTTPLNRYSFPPHFDFGVASSAYQYEGAVEEGGRSPSIWDNFTHAFPERTNMDNGDVAVDFYHRYKDDIKLIKEMNMDSFRFSLSWSRILPSGKLSDGVNKEGVQFYKNLIDELIKNGIKPFVTIYHWDIPQALDDEYGSFLSPRIIDDFRNFARFCFQEFGDKVSMWTTFNEPYVYSVSGYDAGNKAIGRCSKWVNSLCIAGDSGTEPYLVSHNLLLAHAAAVEEFRKCDKISQDAKIGIVLSPYWFEPYDIDSESDKEAVERALVFNIGWHLSPLVFGDYPETIKTTAGNRLPSFTKEQSMMLQNSFDFIGINYYTARFVAHDLHVDLSRPRFTTDQHLQYKLTNRSGDHISSESDGTKILWSYPEGLRKLLNYIKNKYNNPTIYITENGFDDYENGSVTREEIIEDTKRIEYHQNHLQQLQKAITEDGCNVKGYFTWSLLDNFEWEHGYAVRFGLYYVDYKNGLSRHAKNSAKWFKHFLQRSGKPMPLDLFKSVKNWWSAIPMI.

A signal peptide spans 1 to 22 (MAIKLIALVITICVASWDSAQG). Residue Q51 coordinates a beta-D-glucoside. An N-linked (GlcNAc...) asparagine glycan is attached at N68. Residues H154 and 199–200 (NE) contribute to the a beta-D-glucoside site. The Proton donor role is filled by E200. The cysteines at positions 219 and 227 are disulfide-linked. Residue Y344 participates in a beta-D-glucoside binding. N-linked (GlcNAc...) asparagine glycosylation is present at N374. Residue E417 coordinates a beta-D-glucoside. Catalysis depends on E417, which acts as the Nucleophile. The N-linked (GlcNAc...) asparagine glycan is linked to N425. A beta-D-glucoside-binding positions include W467, 474-475 (EW), and F483.

Belongs to the glycosyl hydrolase 1 family.

The catalysed reaction is Hydrolysis of terminal, non-reducing beta-D-glucosyl residues with release of beta-D-glucose.. In Arabidopsis thaliana (Mouse-ear cress), this protein is Beta-glucosidase 32.